The following is a 204-amino-acid chain: MARVEAPQDALGRLIEALRVLPGVGPKSAQRMAFYLLQHDRNGAAVLAQSLGEAVDTVGHCARCNTFSETQICSTCADGRRDPSLLCIVETPADQVMVEQTLSFKGNYFVLMGRISPLDGMGPNEIHFDRLLTRIENPDTGVPIREVVLATNFTSEGEATAHYIGEVLKAKGIKVTRIARGIPVGGELEYVDAGTLARALMDRR.

A C4-type zinc finger spans residues Cys61–Cys76. The Toprim domain maps to Ser84–Pro183.

Belongs to the RecR family.

May play a role in DNA repair. It seems to be involved in an RecBC-independent recombinational process of DNA repair. It may act with RecF and RecO. The sequence is that of Recombination protein RecR from Polynucleobacter asymbioticus (strain DSM 18221 / CIP 109841 / QLW-P1DMWA-1) (Polynucleobacter necessarius subsp. asymbioticus).